Here is a 172-residue protein sequence, read N- to C-terminus: Large ribosomal subunit protein eL20A (172 aa).

A Phosphoserine modification is found at serine 32. Glycyl lysine isopeptide (Lys-Gly) (interchain with G-Cter in ubiquitin) cross-links involve residues lysine 125, lysine 131, and lysine 149.

The protein belongs to the eukaryotic ribosomal protein eL20 family. In terms of assembly, component of the large ribosomal subunit (LSU). Mature yeast ribosomes consist of a small (40S) and a large (60S) subunit. The 40S small subunit contains 1 molecule of ribosomal RNA (18S rRNA) and 33 different proteins (encoded by 57 genes). The large 60S subunit contains 3 rRNA molecules (25S, 5.8S and 5S rRNA) and 46 different proteins (encoded by 81 genes). eL20 forms multiple interactions with RNA and proteins in the central protuberance, connecting components of core functional centers that are located far apart.

The protein localises to the cytoplasm. Component of the ribosome, a large ribonucleoprotein complex responsible for the synthesis of proteins in the cell. The small ribosomal subunit (SSU) binds messenger RNAs (mRNAs) and translates the encoded message by selecting cognate aminoacyl-transfer RNA (tRNA) molecules. The large subunit (LSU) contains the ribosomal catalytic site termed the peptidyl transferase center (PTC), which catalyzes the formation of peptide bonds, thereby polymerizing the amino acids delivered by tRNAs into a polypeptide chain. The nascent polypeptides leave the ribosome through a tunnel in the LSU and interact with protein factors that function in enzymatic processing, targeting, and the membrane insertion of nascent chains at the exit of the ribosomal tunnel. The chain is Large ribosomal subunit protein eL20A from Saccharomyces cerevisiae (strain ATCC 204508 / S288c) (Baker's yeast).